Reading from the N-terminus, the 352-residue chain is Neutral protease 2 homolog ATEG_04941 (352 aa).

The signal sequence occupies residues 1-19 (MRFTALATAILPLACNVLA). Residues 20–175 (LPAKTGEAPK…ASAVKPLDKR (156 aa)) constitute a propeptide that is removed on maturation. Disulfide bonds link Cys-181–Cys-253 and Cys-260–Cys-278. His-303 contacts Zn(2+). Residue Glu-304 is part of the active site. His-307 and Asp-318 together coordinate Zn(2+).

Belongs to the peptidase M35 family. Requires Zn(2+) as cofactor.

The protein localises to the secreted. It carries out the reaction Preferential cleavage of bonds with hydrophobic residues in P1'. Also 3-Asn-|-Gln-4 and 8-Gly-|-Ser-9 bonds in insulin B chain.. Its function is as follows. Secreted metalloproteinase that allows assimilation of proteinaceous substrates. Shows high activities on basic nuclear substrates such as histone and protamine. This is Neutral protease 2 homolog ATEG_04941 from Aspergillus terreus (strain NIH 2624 / FGSC A1156).